The following is a 349-amino-acid chain: GMP reductase (349 aa).

108-131 (IDFLKIKKIFLLSSELKYICIDVA) is an NADP(+) binding site. K(+)-binding residues include G181 and G183. C186 serves as the catalytic Thioimidate intermediate. 216–239 (IISDGGCTVSGDIAKAFGGGADFV) contributes to the NADP(+) binding site.

The protein belongs to the IMPDH/GMPR family. GuaC type 1 subfamily. Homotetramer.

It catalyses the reaction IMP + NH4(+) + NADP(+) = GMP + NADPH + 2 H(+). In terms of biological role, catalyzes the irreversible NADPH-dependent deamination of GMP to IMP. It functions in the conversion of nucleobase, nucleoside and nucleotide derivatives of G to A nucleotides, and in maintaining the intracellular balance of A and G nucleotides. The chain is GMP reductase from Buchnera aphidicola subsp. Acyrthosiphon pisum (strain Tuc7).